The sequence spans 147 residues: Chorion class B protein B.L1 (147 aa).

The interval 1 to 38 is left arm; the sequence is IGCGRGCGGRGYGGLGYGGLGYGGLGYGGLGGGCGRGF. 4 consecutive repeat copies span residues 11 to 15, 16 to 20, 21 to 25, and 26 to 30. Residues 11-30 are 4 X 5 AA tandem repeats of G-Y-G-G-L; sequence GYGGLGYGGLGYGGLGYGGL. The central domain stretch occupies residues 39–107; it reads SGGGLPVATA…GNGAVGITRE (69 aa). Residues 108–147 are right arm (Gly-rich tandem repeats); sequence GGLGYGAGYGGGYGLGYGGYGGGYGLGYGGYGGCGCGCGY.

It belongs to the chorion protein family.

In terms of biological role, this protein is one of many from the eggshell of the silk moth. The polypeptide is Chorion class B protein B.L1 (Bombyx mori (Silk moth)).